The following is a 144-amino-acid chain: Mediator of RNA polymerase II transcription subunit 21 (144 aa).

It belongs to the Mediator complex subunit 21 family. In terms of assembly, component of the Mediator complex, which is composed of MED1, MED4, MED6, MED7, MED8, MED9, MED10, MED11, MED12, MED13, MED13L, MED14, MED15, MED16, MED17, MED18, MED19, MED20, MED21, MED22, MED23, MED24, MED25, MED26, MED27, MED29, MED30, MED31, CCNC, CDK8 and CDC2L6/CDK11. The MED12, MED13, CCNC and CDK8 subunits form a distinct module termed the CDK8 module. Mediator containing the CDK8 module is less active than Mediator lacking this module in supporting transcriptional activation. Individual preparations of the Mediator complex lacking one or more distinct subunits have been variously termed ARC, CRSP, DRIP, PC2, SMCC and TRAP. Interacts with PPARG. Interacts with THRA in a ligand-dependent fashion.

It localises to the nucleus. Functionally, component of the Mediator complex, a coactivator involved in the regulated transcription of nearly all RNA polymerase II-dependent genes. Mediator functions as a bridge to convey information from gene-specific regulatory proteins to the basal RNA polymerase II transcription machinery. Mediator is recruited to promoters by direct interactions with regulatory proteins and serves as a scaffold for the assembly of a functional preinitiation complex with RNA polymerase II and the general transcription factors. This Pongo abelii (Sumatran orangutan) protein is Mediator of RNA polymerase II transcription subunit 21 (MED21).